A 335-amino-acid chain; its full sequence is 5-dehydro-2-deoxygluconokinase (335 aa).

Belongs to the carbohydrate kinase PfkB family.

The catalysed reaction is 5-dehydro-2-deoxy-D-gluconate + ATP = 6-phospho-5-dehydro-2-deoxy-D-gluconate + ADP + H(+). The protein operates within polyol metabolism; myo-inositol degradation into acetyl-CoA; acetyl-CoA from myo-inositol: step 5/7. Its function is as follows. Catalyzes the phosphorylation of 5-dehydro-2-deoxy-D-gluconate (2-deoxy-5-keto-D-gluconate or DKG) to 6-phospho-5-dehydro-2-deoxy-D-gluconate (DKGP). The polypeptide is 5-dehydro-2-deoxygluconokinase (Geobacillus kaustophilus (strain HTA426)).